A 294-amino-acid polypeptide reads, in one-letter code: Survival motor neuron protein (294 aa).

A compositionally biased stretch (gly residues) spans 1–12 (MAMSSGGSGGGV). The disordered stretch occupies residues 1–32 (MAMSSGGSGGGVPEQEDSVLFRRGTGQSDDSD). An N-acetylalanine modification is found at Ala2. A phosphoserine; by PKA mark is found at Ser4, Ser5, and Ser8. Residue Thr25 is modified to Phosphothreonine. Positions 26-51 (GQSDDSDIWDDTALIKAYDKAVASFK) are interacts with GEMIN2. 2 positions are modified to phosphoserine: Ser28 and Ser31. Lys51 is covalently cross-linked (Glycyl lysine isopeptide (Lys-Gly) (interchain with G-Cter in SUMO2)). A disordered region spans residues 59–88 (ICETSGKPKTTPKRKPAKKNKSQKKNTAAS). Over residues 68-82 (TTPKRKPAKKNKSQK) the composition is skewed to basic residues. Phosphothreonine is present on Thr69. Thr85 is modified (phosphothreonine; by PKA). One can recognise a Tudor domain in the interval 91–151 (QWKVGDKCSA…LSPICEVANN (61 aa)). The segment at 97 to 209 (KCSAIWSEDG…MPGPRLGPGK (113 aa)) is required for interaction with RPP20/POP7. Residues 156–166 (AQENENESQVS) are compositionally biased toward low complexity. Residues 156-222 (AQENENESQV…KFNGPPPPPP (67 aa)) are disordered. A Phosphoserine; by PKA modification is found at Ser187. The segment covering 194 to 204 (LPPPPPMPGPR) has biased composition (pro residues). Low complexity predominate over residues 206-215 (GPGKPGLKFN). Residue Lys209 forms a Glycyl lysine isopeptide (Lys-Gly) (interchain with G-Cter in SUMO2) linkage. The tract at residues 240 to 267 (PPIIPPPPPICPDSLDDADALGSMLISW) is P2 (binding site for SNRPB). The tract at residues 252–280 (DSLDDADALGSMLISWYMSGYHTGYYMGF) is involved in homooligomerization. The tract at residues 279 to 294 (GFRQNQKEGRCSHSLN) is required for interaction with SYNCRIP.

Belongs to the SMN family. As to quaternary structure, homooligomer; may form higher order homooligomers in the dimer to octamer range. Part of the core SMN complex that contains SMN1, GEMIN2/SIP1, DDX20/GEMIN3, GEMIN4, GEMIN5, GEMIN6, GEMIN7, GEMIN8 and STRAP/UNRIP. Part of the SMN-Sm complex that contains SMN1, GEMIN2/SIP1, DDX20/GEMIN3, GEMIN4, GEMIN5, GEMIN6, GEMIN7, GEMIN8, STRAP/UNRIP and the Sm proteins SNRPB, SNRPD1, SNRPD2, SNRPD3, SNRPE, SNRPF and SNRPG. Component of an import snRNP complex composed of KPNB1, RNUT1, SMN1 and ZNF259. Interacts with DDX20, FBL, NOLA1, RNUT1, SYNCRIP and with several spliceosomal snRNP core Sm proteins, including SNRPB, SNRPD1, SNRPD2, SNRPD3, SNRPE and ILF3. Interacts with GEMIN2; the interaction is direct. Interacts with GEMIN3; the interaction is direct. Interacts with GEMIN8; the interaction is direct. Interacts with SNRPB; the interaction is direct. Interacts (via Tudor domain) with SNRPD1 (via C-terminus); the interaction is direct. Interacts with SNRPD2; the interaction is direct. Interacts (via Tudor domain) with SNRPD3 (via C-terminus); the interaction is direct. Interacts with SNRPE; the interaction is direct. Interacts with OSTF1, LSM10, LSM11 and RPP20/POP7. Interacts (via C-terminal region) with ZPR1 (via C-terminal region). Interacts (via Tudor domain) with COIL. Interacts with SETX; recruits SETX to POLR2A. Interacts with POLR2A (via the C-terminal domain (CTD)). Interacts with PRMT5. Interacts with XRN2. Interacts (via C-terminus) with FMR1 (via C-terminus); the interaction is direct and occurs in a RNA-independent manner. Interacts (via Tudor domain) with SF3B2 ('Arg-508'-methylated form). Interacts with WRAP53/TCAB1. Interacts (via Tudor domain) with ELAVL4 in an RNA-independent manner; the interaction is required for localization of ELAVL4 to RNA granules. Interacts with FRG1. Does not homooligomerize. Does not interact with SNRPB. In terms of tissue distribution, expressed in a wide variety of tissues. Expressed at high levels in brain, kidney and liver, moderate levels in skeletal and cardiac muscle, and low levels in fibroblasts and lymphocytes. Also seen at high levels in spinal cord. Present in osteoclasts and mononuclear cells (at protein level).

It is found in the nucleus. Its subcellular location is the gem. It localises to the cajal body. The protein resides in the cytoplasm. The protein localises to the cytoplasmic granule. It is found in the perikaryon. Its subcellular location is the cell projection. It localises to the neuron projection. The protein resides in the axon. The protein localises to the myofibril. It is found in the sarcomere. Its subcellular location is the z line. Functionally, the SMN complex catalyzes the assembly of small nuclear ribonucleoproteins (snRNPs), the building blocks of the spliceosome, and thereby plays an important role in the splicing of cellular pre-mRNAs. Most spliceosomal snRNPs contain a common set of Sm proteins SNRPB, SNRPD1, SNRPD2, SNRPD3, SNRPE, SNRPF and SNRPG that assemble in a heptameric protein ring on the Sm site of the small nuclear RNA to form the core snRNP (Sm core). In the cytosol, the Sm proteins SNRPD1, SNRPD2, SNRPE, SNRPF and SNRPG are trapped in an inactive 6S pICln-Sm complex by the chaperone CLNS1A that controls the assembly of the core snRNP. To assemble core snRNPs, the SMN complex accepts the trapped 5Sm proteins from CLNS1A forming an intermediate. Within the SMN complex, SMN1 acts as a structural backbone and together with GEMIN2 it gathers the Sm complex subunits. Binding of snRNA inside 5Sm ultimately triggers eviction of the SMN complex, thereby allowing binding of SNRPD3 and SNRPB to complete assembly of the core snRNP. Ensures the correct splicing of U12 intron-containing genes that may be important for normal motor and proprioceptive neurons development. Also required for resolving RNA-DNA hybrids created by RNA polymerase II, that form R-loop in transcription terminal regions, an important step in proper transcription termination. May also play a role in the metabolism of small nucleolar ribonucleoprotein (snoRNPs). The sequence is that of Survival motor neuron protein (SMN1) from Homo sapiens (Human).